The primary structure comprises 170 residues: Small ribosomal subunit protein uS9 (170 aa).

Positions Met-1–Gly-47 are disordered.

Belongs to the universal ribosomal protein uS9 family.

This Streptomyces coelicolor (strain ATCC BAA-471 / A3(2) / M145) protein is Small ribosomal subunit protein uS9 (rpsI).